Reading from the N-terminus, the 441-residue chain is Transcriptional regulatory protein ZraR (441 aa).

A Response regulatory domain is found at 7–121 (DILVVDDDIS…NLQATLEKAL (115 aa)). D56 bears the 4-aspartylphosphate mark. The Sigma-54 factor interaction domain occupies 141 to 370 (MVGKSPAMQH…LENAVERAVV (230 aa)). 4 residues coordinate ATP: G172, T173, R329, and R359. A DNA-binding region (H-T-H motif) is located at residues 421–440 (KTEAARQLGITRKTLLAKLS).

Phosphorylated by ZraS.

The protein localises to the cytoplasm. With respect to regulation, activity of the ZraS/ZraR two-component system is repressed by the zinc-bound form of ZraP, which probably interacts with the periplasmic region of ZraS. Its function is as follows. Part of the Zra signaling pathway, an envelope stress response (ESR) system composed of the periplasmic accessory protein ZraP, the histidine kinase ZraS and the transcriptional regulator ZraR. The ZraPSR system contributes to antibiotic resistance and is important for membrane integrity in the presence of membrane-targeting biocides. ZraR is a member of the two-component regulatory system ZraS/ZraR. When activated by ZraS, acts in conjunction with sigma-54 to regulate the expression of zraP in the presence of high Zn(2+) or Pb(2+) concentrations. Also positively autoregulates the expression of the zraSR operon. This Escherichia coli O157:H7 protein is Transcriptional regulatory protein ZraR (zraR).